Consider the following 151-residue polypeptide: Methylated-DNA--protein-cysteine methyltransferase (151 aa).

Cys-119 acts as the Nucleophile; methyl group acceptor in catalysis.

The protein belongs to the MGMT family.

The protein resides in the cytoplasm. The enzyme catalyses a 6-O-methyl-2'-deoxyguanosine in DNA + L-cysteinyl-[protein] = S-methyl-L-cysteinyl-[protein] + a 2'-deoxyguanosine in DNA. The catalysed reaction is a 4-O-methyl-thymidine in DNA + L-cysteinyl-[protein] = a thymidine in DNA + S-methyl-L-cysteinyl-[protein]. Functionally, involved in the cellular defense against the biological effects of O6-methylguanine (O6-MeG) and O4-methylthymine (O4-MeT) in DNA. Repairs the methylated nucleobase in DNA by stoichiometrically transferring the methyl group to a cysteine residue in the enzyme. This is a suicide reaction: the enzyme is irreversibly inactivated. The sequence is that of Methylated-DNA--protein-cysteine methyltransferase from Saccharolobus islandicus (strain M.16.27) (Sulfolobus islandicus).